A 768-amino-acid polypeptide reads, in one-letter code: Pentatricopeptide repeat-containing protein At4g01030, mitochondrial (768 aa).

The transit peptide at 1-25 (MYRFLGLTIHGGLIKRGLDNSDTRV) directs the protein to the mitochondrion. 16 PPR repeats span residues 22-52 (DTRV…MPKR), 53-87 (DDLA…GAKA), 88-122 (YDST…GLES), 123-153 (NVSM…MKDR), 154-188 (NLSS…GLKP), 189-223 (DIVT…GLKP), 224-254 (STSS…ILRN), 259-289 (DVYV…MDAK), 290-324 (NIVA…GIKP), 325-359 (DAIT…GVAP), 360-394 (NVVS…GVGP), 395-429 (NAAT…NLIC), 430-460 (DAYV…IKNK), 461-495 (SLAS…GMEP), 496-526 (DAIT…MRSR), and 532-562 (TIEH…MSLK). The type E motif stretch occupies residues 567–642 (IWGAFLSSCK…QDLWSWIQID (76 aa)). A type E(+) motif region spans residues 643-673 (QTVHIFYAEGKTHPDEGDIYFELYKLVSEMK). Residues 674–768 (KSGYVPDTSC…DGKCSCNDSW (95 aa)) form a type DYW motif region.

This sequence belongs to the PPR family. PCMP-H subfamily.

Its subcellular location is the mitochondrion. This Arabidopsis thaliana (Mouse-ear cress) protein is Pentatricopeptide repeat-containing protein At4g01030, mitochondrial (PCMP-H65).